The sequence spans 64 residues: Small ribosomal subunit protein eS17 (64 aa).

Belongs to the eukaryotic ribosomal protein eS17 family.

The chain is Small ribosomal subunit protein eS17 from Methanococcoides burtonii (strain DSM 6242 / NBRC 107633 / OCM 468 / ACE-M).